Here is an 837-residue protein sequence, read N- to C-terminus: Vacuolar membrane protease (837 aa).

Over 1–36 (MSEEEVHDTSSEASEVFTNQPNAFVRGVRSIFGYRK) the chain is Cytoplasmic. Residues 37-57 (TSLTLFVILTIVVTAGLSFYD) traverse the membrane as a helical segment. Residues 58–355 (NSLELTIELP…FATPISALAR (298 aa)) lie on the Vacuolar side of the membrane. N-linked (GlcNAc...) asparagine glycosylation occurs at Asn143. Residues His157 and Asp169 each contribute to the Zn(2+) site. Catalysis depends on Glu201, which acts as the Proton acceptor. Zn(2+) is bound by residues Glu202, Glu227, and His299. A helical membrane pass occupies residues 356 to 376 (VNLVLLVLFPVVSTPLLFVIV). At 377 to 384 (KYKKWKLR) the chain is on the cytoplasmic side. Residues 385 to 405 (VTNFLGVPLAMGLAVAVGQVG) traverse the membrane as a helical segment. Residues 406–415 (NPMLVSSHPM) are Vacuolar-facing. The chain crosses the membrane as a helical span at residues 416-436 (MVVATTTSIVVLVYYVVLNGV). Residues 437 to 446 (DWVNTSSDQK) lie on the Cytoplasmic side of the membrane. A helical transmembrane segment spans residues 447-467 (LVTMIEVSFVYWVVLVYVTWS). At 468 to 474 (GGDHTGE) the chain is on the vacuolar side. Residues 475–495 (FGVTVLFFVQASTSLLGLIGW) form a helical membrane-spanning segment. At 496–539 (TFTRVRGGDEPLLSGEEERYGTEDERDTEKPLVEHNYDWSLQYL) the chain is on the cytoplasmic side. Residues 540–560 (LIVPVSSLVVYNSGWLVLEGV) form a helical membrane-spanning segment. Asn561 is a glycosylation site (N-linked (GlcNAc...) asparagine). The Vacuolar portion of the chain corresponds to 561 to 572 (NKTVQESLASEH). A helical membrane pass occupies residues 573 to 593 (LIYWIVVVFSQFLVLPVVPFI). The Cytoplasmic portion of the chain corresponds to 594 to 598 (TKFNR). The chain crosses the membrane as a helical span at residues 599 to 619 (YIVLGLSVVVVVGVLMSMAVH). Over 620-837 (PFNQGSPMKL…LVGVVKHVDV (218 aa)) the chain is Vacuolar. N-linked (GlcNAc...) asparagine glycosylation is present at Asn689.

This sequence belongs to the peptidase M28 family. Zn(2+) is required as a cofactor.

It is found in the vacuole membrane. Its function is as follows. May be involved in vacuolar sorting and osmoregulation. In Candida albicans (strain SC5314 / ATCC MYA-2876) (Yeast), this protein is Vacuolar membrane protease.